We begin with the raw amino-acid sequence, 154 residues long: Prefoldin subunit alpha (154 aa).

This sequence belongs to the prefoldin alpha subunit family. As to quaternary structure, heterohexamer of two alpha and four beta subunits.

The protein resides in the cytoplasm. Molecular chaperone capable of stabilizing a range of proteins. Seems to fulfill an ATP-independent, HSP70-like function in archaeal de novo protein folding. The chain is Prefoldin subunit alpha from Hyperthermus butylicus (strain DSM 5456 / JCM 9403 / PLM1-5).